Here is a 128-residue protein sequence, read N- to C-terminus: Small ribosomal subunit protein uS9 (128 aa).

The segment at Ser106–Arg128 is disordered. The segment covering Val109 to Arg128 has biased composition (basic residues).

This sequence belongs to the universal ribosomal protein uS9 family.

The polypeptide is Small ribosomal subunit protein uS9 (Azobacteroides pseudotrichonymphae genomovar. CFP2).